An 87-amino-acid chain; its full sequence is Small ribosomal subunit protein uS19 (87 aa).

Belongs to the universal ribosomal protein uS19 family.

Its function is as follows. Protein S19 forms a complex with S13 that binds strongly to the 16S ribosomal RNA. The sequence is that of Small ribosomal subunit protein uS19 from Mesoplasma florum (strain ATCC 33453 / NBRC 100688 / NCTC 11704 / L1) (Acholeplasma florum).